The following is a 129-amino-acid chain: uncharacterized protein (129 aa).

The segment covering 86–96 (NDGFSSDDEPE) has biased composition (acidic residues). Positions 86-129 (NDGFSSDDEPEEHVILTEDNQGEPSETPQATFDITEFIKTEDED) are disordered. A compositionally biased stretch (polar residues) spans 103-117 (EDNQGEPSETPQATF).

The protein belongs to the asfivirus D129L family.

This is an uncharacterized protein from African swine fever virus (isolate Tick/South Africa/Pretoriuskop Pr4/1996) (ASFV).